Consider the following 365-residue polypeptide: GTPase Obg (365 aa).

Residues 1 to 159 (MKFIDEARIE…RMLKLELKVL (159 aa)) enclose the Obg domain. Residues 160 to 334 (ADVGLLGMPN…LIYAIKDHLQ (175 aa)) enclose the OBG-type G domain. Residues 166-173 (GMPNAGKS), 191-195 (FTTLH), 213-216 (DIPG), 284-287 (NKLD), and 315-317 (SAL) each bind GTP. Serine 173 and threonine 193 together coordinate Mg(2+).

Belongs to the TRAFAC class OBG-HflX-like GTPase superfamily. OBG GTPase family. In terms of assembly, monomer. Mg(2+) serves as cofactor.

It is found in the cytoplasm. Functionally, an essential GTPase which binds GTP, GDP and possibly (p)ppGpp with moderate affinity, with high nucleotide exchange rates and a fairly low GTP hydrolysis rate. Plays a role in control of the cell cycle, stress response, ribosome biogenesis and in those bacteria that undergo differentiation, in morphogenesis control. In Cupriavidus necator (strain ATCC 17699 / DSM 428 / KCTC 22496 / NCIMB 10442 / H16 / Stanier 337) (Ralstonia eutropha), this protein is GTPase Obg.